The chain runs to 467 residues: Argininosuccinate lyase 1 (467 aa).

The protein belongs to the lyase 1 family. Argininosuccinate lyase subfamily.

It localises to the cytoplasm. The enzyme catalyses 2-(N(omega)-L-arginino)succinate = fumarate + L-arginine. The protein operates within amino-acid biosynthesis; L-arginine biosynthesis; L-arginine from L-ornithine and carbamoyl phosphate: step 3/3. The chain is Argininosuccinate lyase 1 from Rhizobium meliloti (strain 1021) (Ensifer meliloti).